Consider the following 66-residue polypeptide: Large ribosomal subunit protein bL33c (66 aa).

It belongs to the bacterial ribosomal protein bL33 family.

It localises to the plastid. The protein localises to the chloroplast. The polypeptide is Large ribosomal subunit protein bL33c (Nicotiana sylvestris (Wood tobacco)).